We begin with the raw amino-acid sequence, 399 residues long: Digeranylgeranylglycerophospholipid reductase (399 aa).

Residues Gly-15, Glu-34, Cys-45, Ala-46, Gly-48, Arg-99, Ala-123, Asp-280, Gly-292, and Ile-293 each contribute to the FAD site.

It belongs to the geranylgeranyl reductase family. DGGGPL reductase subfamily. FAD is required as a cofactor.

The catalysed reaction is a 2,3-bis-O-phytanyl-sn-glycerol 1-phospholipid + 8 oxidized 2[4Fe-4S]-[ferredoxin] = a 2,3-bis-O-(geranylgeranyl)-sn-glycerol 1-phospholipid + 8 reduced 2[4Fe-4S]-[ferredoxin] + 16 H(+). The enzyme catalyses 2,3-bis-O-(phytanyl)-sn-glycerol 1-phosphate + 8 oxidized 2[4Fe-4S]-[ferredoxin] = 2,3-bis-O-(geranylgeranyl)-sn-glycerol 1-phosphate + 8 reduced 2[4Fe-4S]-[ferredoxin] + 16 H(+). It catalyses the reaction a 2,3-bis-O-phytanyl-sn-glycerol 1-phospholipid + 8 A = a 2,3-bis-O-(geranylgeranyl)-sn-glycerol 1-phospholipid + 8 AH2. It carries out the reaction CDP-2,3-bis-O-(geranylgeranyl)-sn-glycerol + 8 AH2 = CDP-2,3-bis-O-(phytanyl)-sn-glycerol + 8 A. The catalysed reaction is archaetidylserine + 8 AH2 = 2,3-bis-O-phytanyl-sn-glycero-3-phospho-L-serine + 8 A. It participates in membrane lipid metabolism; glycerophospholipid metabolism. In terms of biological role, is involved in the reduction of 2,3-digeranylgeranylglycerophospholipids (unsaturated archaeols) into 2,3-diphytanylglycerophospholipids (saturated archaeols) in the biosynthesis of archaeal membrane lipids. Catalyzes the formation of archaetidic acid (2,3-di-O-phytanyl-sn-glyceryl phosphate) from 2,3-di-O-geranylgeranylglyceryl phosphate (DGGGP) via the hydrogenation of each double bond of the isoprenoid chains. Is also probably able to reduce double bonds of geranyl groups in CDP-2,3-bis-O-(geranylgeranyl)-sn-glycerol and archaetidylserine, thus acting at various stages in the biosynthesis of archaeal membrane lipids. The protein is Digeranylgeranylglycerophospholipid reductase of Methanosphaerula palustris (strain ATCC BAA-1556 / DSM 19958 / E1-9c).